Reading from the N-terminus, the 495-residue chain is Phosphomethylpyrimidine synthase (495 aa).

Residues asparagine 125, methionine 154, tyrosine 183, histidine 219, 239-241 (SRG), 280-283 (DGLR), and glutamate 319 each bind substrate. Residue histidine 323 coordinates Zn(2+). Tyrosine 346 is a binding site for substrate. Position 387 (histidine 387) interacts with Zn(2+). The [4Fe-4S] cluster site is built by cysteine 467, cysteine 470, and cysteine 475.

This sequence belongs to the ThiC family. [4Fe-4S] cluster serves as cofactor.

It catalyses the reaction 5-amino-1-(5-phospho-beta-D-ribosyl)imidazole + S-adenosyl-L-methionine = 4-amino-2-methyl-5-(phosphooxymethyl)pyrimidine + CO + 5'-deoxyadenosine + formate + L-methionine + 3 H(+). Its pathway is cofactor biosynthesis; thiamine diphosphate biosynthesis. Functionally, catalyzes the synthesis of the hydroxymethylpyrimidine phosphate (HMP-P) moiety of thiamine from aminoimidazole ribotide (AIR) in a radical S-adenosyl-L-methionine (SAM)-dependent reaction. This chain is Phosphomethylpyrimidine synthase, found in Leptospira interrogans serogroup Icterohaemorrhagiae serovar Lai (strain 56601).